A 432-amino-acid polypeptide reads, in one-letter code: Amino acid transporter ANT1 (432 aa).

The interval 1 to 30 is disordered; the sequence is MAIKDLTATTGDSSLPLIKSPPSETTGGDR. Over 1–35 the chain is Cytoplasmic; it reads MAIKDLTATTGDSSLPLIKSPPSETTGGDRTSALQ. Residues 36 to 56 form a helical membrane-spanning segment; that stretch reads TLGNIIVSIVGTGVLGLPYAF. Residues 57-62 are Lumenal-facing; that stretch reads RIAGWL. A helical transmembrane segment spans residues 63–83; the sequence is AGSLGVIIVGFATYYCMLLLI. Topologically, residues 84 to 115 are cytoplasmic; sequence QCRDKLESEEGEEESKTYGDLGFKCMGTKGRY. The helical transmembrane segment at 116 to 136 threads the bilayer; it reads LTEFLIFTAQCGGSVAYLVFI. The Lumenal segment spans residues 137 to 147; that stretch reads GRNLSSIFSSY. Residues 148 to 168 form a helical membrane-spanning segment; sequence GLSMVSFILILVPIEVGLSWI. At 169-172 the chain is on the cytoplasmic side; that stretch reads TSLS. The helical transmembrane segment at 173 to 193 threads the bilayer; the sequence is ALSPFSIFADICNIIAMCFVV. Over 194–219 the chain is Lumenal; that stretch reads KENVEMVIEGDFSFSDRTAISSTIGG. Residues 220 to 240 form a helical membrane-spanning segment; that stretch reads LPFAGGVAVFCFEGFAMTLAL. The Cytoplasmic portion of the chain corresponds to 241-256; sequence ESSMREREAFPKLLAK. Residues 257–277 form a helical membrane-spanning segment; it reads VLAGITFVYVLFGFCGYMAYG. Residues 278-292 lie on the Lumenal side of the membrane; sequence DQTKDIITLNLPNNW. The helical transmembrane segment at 293 to 313 threads the bilayer; sequence SAIAVQIGLCVGLTFTFPIMV. Residues 314-353 lie on the Cytoplasmic side of the membrane; sequence HPLNEIIEQKLKRIDWLQKHHNGYSNETGSVSKFAIFTTR. Residues 354–374 traverse the membrane as a helical segment; sequence TLLVVGLAAIASLVPGFGTFA. Residues 375 to 379 are Lumenal-facing; it reads SLVGS. Residues 380 to 400 traverse the membrane as a helical segment; sequence TLCALISFVLPASYHLTLLGP. Residues 401–410 lie on the Cytoplasmic side of the membrane; the sequence is SLNVWNKSID. The chain crosses the membrane as a helical span at residues 411–431; sequence VFIVICGLIFAVYGTYNTIVG. Residue valine 432 is a topological domain, lumenal.

This sequence belongs to the amino acid/polyamine transporter 2 family. Amino acid/auxin permease (AAAP) (TC 2.A.18.8) subfamily. Ubiquitous. Highly expressed in flowers and cauline leaves and at lower levels in stems, leaves and roots.

The protein resides in the endoplasmic reticulum membrane. In terms of biological role, translocates aromatic and neutral amino acids such as tyrosine, tryptophan, phenylalanine, histidine, proline, leucine, valine, glutamine, as well as arginine. Transports the auxins indole-3-acetic acid (IAA) and 2,4-dichlorophenoxyacetic acid (2,4-D). This chain is Amino acid transporter ANT1, found in Arabidopsis thaliana (Mouse-ear cress).